An 83-amino-acid chain; its full sequence is Exodeoxyribonuclease 7 small subunit (83 aa).

The protein belongs to the XseB family. In terms of assembly, heterooligomer composed of large and small subunits.

It is found in the cytoplasm. The enzyme catalyses Exonucleolytic cleavage in either 5'- to 3'- or 3'- to 5'-direction to yield nucleoside 5'-phosphates.. Bidirectionally degrades single-stranded DNA into large acid-insoluble oligonucleotides, which are then degraded further into small acid-soluble oligonucleotides. This Nitrobacter winogradskyi (strain ATCC 25391 / DSM 10237 / CIP 104748 / NCIMB 11846 / Nb-255) protein is Exodeoxyribonuclease 7 small subunit.